The chain runs to 577 residues: F-box-like/WD repeat-containing protein TBL1X (577 aa).

The region spanning 55 to 87 (TSDEVNFLVYRYLQESGFSHSAFTFGIESHISQ) is the LisH domain. An F-box-like domain is found at 92 to 137 (GTLVPPAALISILQKGLQYVEAEISINEDGTVFDGRPIESLSLIDA). K153 is modified (N6-acetyllysine). Residues 177–202 (TTSAGVSHQNPSKNREATVNGEENRA) are disordered. S183 carries the post-translational modification Phosphoserine. 8 WD repeats span residues 230 to 269 (GHES…NGGS), 286 to 325 (PSNK…ASTL), 327 to 366 (QHKG…AKQQ), 369 to 409 (FHSA…KTFQ), 410 to 449 (GHTN…CIHD), 452 to 500 (AHNK…CTHT), 503 to 542 (KHQE…LVHS), and 544 to 576 (RGTG…LDLR). A Glycyl lysine isopeptide (Lys-Gly) (interchain with G-Cter in SUMO2) cross-link involves residue K340.

This sequence belongs to the WD repeat EBI family. In terms of assembly, homotetramer; dimer of dimers. Component of the N-Cor repressor complex, at least composed of NCOR1, NCOR2, HDAC3, TBL1X, TBL1R, CORO2A and GPS2. Interacts with GPS2 (when sumoylated); leading to protect GPS2 against degradation by the proteasome. Component of a E3 ubiquitin ligase complex containing UBE2D1, SIAH1, CACYBP/SIP, SKP1, APC and TBL1X. Probably part of other corepressor complexes, that do not contain NCOR1 and NCOR2. Interacts with histones H2B, H3a and H4. Interacts with MECP2; recruits TBL1X to the heterochromatin foci. Interacts with USP44. Ubiquitous.

It localises to the nucleus. In terms of biological role, F-box-like protein involved in the recruitment of the ubiquitin/19S proteasome complex to nuclear receptor-regulated transcription units. Plays an essential role in transcription activation mediated by nuclear receptors. Probably acts as integral component of corepressor complexes that mediates the recruitment of the 19S proteasome complex, leading to the subsequent proteasomal degradation of transcription repressor complexes, thereby allowing cofactor exchange. This Homo sapiens (Human) protein is F-box-like/WD repeat-containing protein TBL1X (TBL1X).